Reading from the N-terminus, the 783-residue chain is uncharacterized protein (783 aa).

The zn(2)-C6 fungal-type DNA-binding region spans 40–66 (CFNCKARKVRCDGANPCKACASNNLEC).

Its subcellular location is the cytoplasm. It is found in the nucleus. This is an uncharacterized protein from Schizosaccharomyces pombe (strain 972 / ATCC 24843) (Fission yeast).